The chain runs to 420 residues: Glutamyl-tRNA reductase (420 aa).

Residues 49–52 (TCNR), S109, 114–116 (EPQ), and Q120 contribute to the substrate site. C50 acts as the Nucleophile in catalysis. 189–194 (GAGETI) contributes to the NADP(+) binding site.

It belongs to the glutamyl-tRNA reductase family. In terms of assembly, homodimer.

The enzyme catalyses (S)-4-amino-5-oxopentanoate + tRNA(Glu) + NADP(+) = L-glutamyl-tRNA(Glu) + NADPH + H(+). It participates in porphyrin-containing compound metabolism; protoporphyrin-IX biosynthesis; 5-aminolevulinate from L-glutamyl-tRNA(Glu): step 1/2. Catalyzes the NADPH-dependent reduction of glutamyl-tRNA(Glu) to glutamate 1-semialdehyde (GSA). The protein is Glutamyl-tRNA reductase of Proteus mirabilis (strain HI4320).